Reading from the N-terminus, the 138-residue chain is Large ribosomal subunit protein uL16 (138 aa).

The span at 1–13 (MLQPARRKFRKEQ) shows a compositional bias: basic residues. The segment at 1 to 22 (MLQPARRKFRKEQKGRNTGVAT) is disordered.

This sequence belongs to the universal ribosomal protein uL16 family. Part of the 50S ribosomal subunit.

Binds 23S rRNA and is also seen to make contacts with the A and possibly P site tRNAs. In Acidovorax ebreus (strain TPSY) (Diaphorobacter sp. (strain TPSY)), this protein is Large ribosomal subunit protein uL16.